Here is a 250-residue protein sequence, read N- to C-terminus: Probable transcriptional regulatory protein Lferr_0060 (250 aa).

This sequence belongs to the TACO1 family.

It localises to the cytoplasm. In Acidithiobacillus ferrooxidans (strain ATCC 53993 / BNL-5-31) (Leptospirillum ferrooxidans (ATCC 53993)), this protein is Probable transcriptional regulatory protein Lferr_0060.